Here is a 459-residue protein sequence, read N- to C-terminus: Exodeoxyribonuclease 7 large subunit (459 aa).

It belongs to the XseA family. As to quaternary structure, heterooligomer composed of large and small subunits.

The protein resides in the cytoplasm. It carries out the reaction Exonucleolytic cleavage in either 5'- to 3'- or 3'- to 5'-direction to yield nucleoside 5'-phosphates.. Its function is as follows. Bidirectionally degrades single-stranded DNA into large acid-insoluble oligonucleotides, which are then degraded further into small acid-soluble oligonucleotides. The sequence is that of Exodeoxyribonuclease 7 large subunit from Pseudomonas entomophila (strain L48).